The following is a 272-amino-acid chain: 3-deoxy-manno-octulosonate cytidylyltransferase (272 aa).

It belongs to the KdsB family.

The protein localises to the cytoplasm. It carries out the reaction 3-deoxy-alpha-D-manno-oct-2-ulosonate + CTP = CMP-3-deoxy-beta-D-manno-octulosonate + diphosphate. Its pathway is nucleotide-sugar biosynthesis; CMP-3-deoxy-D-manno-octulosonate biosynthesis; CMP-3-deoxy-D-manno-octulosonate from 3-deoxy-D-manno-octulosonate and CTP: step 1/1. It functions in the pathway bacterial outer membrane biogenesis; lipopolysaccharide biosynthesis. Activates KDO (a required 8-carbon sugar) for incorporation into bacterial lipopolysaccharide in Gram-negative bacteria. The polypeptide is 3-deoxy-manno-octulosonate cytidylyltransferase (Verminephrobacter eiseniae (strain EF01-2)).